The primary structure comprises 145 residues: 3-hydroxyacyl-[acyl-carrier-protein] dehydratase FabZ (145 aa).

Residue His51 is part of the active site.

Belongs to the thioester dehydratase family. FabZ subfamily.

Its subcellular location is the cytoplasm. It catalyses the reaction a (3R)-hydroxyacyl-[ACP] = a (2E)-enoyl-[ACP] + H2O. Functionally, involved in unsaturated fatty acids biosynthesis. Catalyzes the dehydration of short chain beta-hydroxyacyl-ACPs and long chain saturated and unsaturated beta-hydroxyacyl-ACPs. This chain is 3-hydroxyacyl-[acyl-carrier-protein] dehydratase FabZ, found in Staphylococcus saprophyticus subsp. saprophyticus (strain ATCC 15305 / DSM 20229 / NCIMB 8711 / NCTC 7292 / S-41).